The sequence spans 334 residues: Cyclin N-terminal domain-containing protein 1 (334 aa).

A Cyclin N-terminal domain is found at 29 to 180 (NALLHLAQQN…ILKSLNFQIN (152 aa)).

In terms of assembly, interacts with PRR19; this interaction promotes crossover formation. Interacts with RFC3 and RFC4; these interactions facilitate crossover formation. Interacts with CDC34; this interaction regulates the cell-cycle progression. Isoform 2 is expressed in spermatocyte.

The protein resides in the nucleus. Its subcellular location is the cytoplasm. It localises to the chromosome. Its function is as follows. Plays a role in the different steps of crossover formation during meiotic recombination. Participates in the crossover differentiation step of crossover-specific recombination intermediates through its interaction with PRR19. In addition, stimulates crossover formation through the interactions with RFC3 and RFC4 and simultaneously regulates cell-cycle progression through interactions with CDC34 and subsequent ubiquitination of WEE1. May also participates in an active deselection process that destabilizes or removes excess pre-CO intermediates. The polypeptide is Cyclin N-terminal domain-containing protein 1 (Mus musculus (Mouse)).